A 512-amino-acid chain; its full sequence is ATP synthase subunit alpha, chloroplastic (512 aa).

Residue Gly170–Thr177 participates in ATP binding.

It belongs to the ATPase alpha/beta chains family. As to quaternary structure, F-type ATPases have 2 components, CF(1) - the catalytic core - and CF(0) - the membrane proton channel. CF(1) has five subunits: alpha(3), beta(3), gamma(1), delta(1), epsilon(1). CF(0) has four main subunits: a, b, b' and c.

It is found in the plastid. The protein resides in the chloroplast thylakoid membrane. It carries out the reaction ATP + H2O + 4 H(+)(in) = ADP + phosphate + 5 H(+)(out). Produces ATP from ADP in the presence of a proton gradient across the membrane. The alpha chain is a regulatory subunit. The protein is ATP synthase subunit alpha, chloroplastic of Staurastrum punctulatum (Green alga).